The following is an 89-amino-acid chain: Large ribosomal subunit protein bL27 (89 aa).

Residues 1–21 (MAHKKAGGSSRNGRDSAGRRL) are disordered.

This sequence belongs to the bacterial ribosomal protein bL27 family.

The polypeptide is Large ribosomal subunit protein bL27 (Novosphingobium aromaticivorans (strain ATCC 700278 / DSM 12444 / CCUG 56034 / CIP 105152 / NBRC 16084 / F199)).